The sequence spans 157 residues: Putative low molecular weight protein-tyrosine-phosphatase slr0328 (157 aa).

The active-site Nucleophile is Cys7. Residue Arg13 is part of the active site. Asp124 acts as the Proton donor in catalysis.

This sequence belongs to the low molecular weight phosphotyrosine protein phosphatase family.

The enzyme catalyses O-phospho-L-tyrosyl-[protein] + H2O = L-tyrosyl-[protein] + phosphate. The polypeptide is Putative low molecular weight protein-tyrosine-phosphatase slr0328 (Synechocystis sp. (strain ATCC 27184 / PCC 6803 / Kazusa)).